The sequence spans 407 residues: [Pyruvate dehydrogenase (acetyl-transferring)] kinase isozyme 2, mitochondrial (407 aa).

The region spanning L135 to S364 is the Histidine kinase domain. Y215 and Y216 each carry phosphotyrosine. Residues E251 to R258, D290, S309 to T310, and G325 to L330 each bind ATP. N6-succinyllysine is present on K376.

Belongs to the PDK/BCKDK protein kinase family. In terms of assembly, homodimer, and heterodimer with PDK1. Interacts with the pyruvate dehydrogenase complex subunit DLAT, and is part of the multimeric pyruvate dehydrogenase complex that contains multiple copies of pyruvate dehydrogenase (E1), dihydrolipoamide acetyltransferase (DLAT, E2) and lipoamide dehydrogenase (DLD, E3). Detected in heart (at protein level). Highest level of expression in heart and skeletal muscle and the lowest in spleen and lung. Liver, kidney, brain and testis levels are intermediate.

It is found in the mitochondrion matrix. It carries out the reaction L-seryl-[pyruvate dehydrogenase E1 alpha subunit] + ATP = O-phospho-L-seryl-[pyruvate dehydrogenase E1 alpha subunit] + ADP + H(+). Activity increases in response to increased acetyl-CoA and NADH levels and upon binding to the pyruvate dehydrogenase subunit DLAT. Inhibited by ADP and pyruvate; these compounds interfere with DLAT binding and thereby inhibit kinase activity. Inhibited by dichloroacetate. Inhibited by AZD7545; this compound interferes with DLAT binding and thereby inhibits kinase activity. Reactive oxygen species cause the formation of disulfide bonds, and thereby inhibit the enzyme. Functionally, kinase that plays a key role in the regulation of glucose and fatty acid metabolism and homeostasis via phosphorylation of the pyruvate dehydrogenase subunits PDHA1 and PDHA2. This inhibits pyruvate dehydrogenase activity, and thereby regulates metabolite flux through the tricarboxylic acid cycle, down-regulates aerobic respiration and inhibits the formation of acetyl-coenzyme A from pyruvate. Inhibition of pyruvate dehydrogenase decreases glucose utilization and increases fat metabolism. Mediates cellular responses to insulin. Plays an important role in maintaining normal blood glucose levels and in metabolic adaptation to nutrient availability. Via its regulation of pyruvate dehydrogenase activity, plays an important role in maintaining normal blood pH and in preventing the accumulation of ketone bodies under starvation. Plays a role in the regulation of cell proliferation and in resistance to apoptosis under oxidative stress. Plays a role in p53/TP53-mediated apoptosis. In Rattus norvegicus (Rat), this protein is [Pyruvate dehydrogenase (acetyl-transferring)] kinase isozyme 2, mitochondrial (Pdk2).